We begin with the raw amino-acid sequence, 292 residues long: 2-(5''-triphosphoribosyl)-3'-dephosphocoenzyme-A synthase (292 aa).

It belongs to the CitG/MdcB family.

The enzyme catalyses 3'-dephospho-CoA + ATP = 2'-(5''-triphospho-alpha-D-ribosyl)-3'-dephospho-CoA + adenine. In terms of biological role, catalyzes the formation of 2-(5''-triphosphoribosyl)-3'-dephosphocoenzyme-A, the precursor of the prosthetic group of the holo-acyl carrier protein (gamma chain) of citrate lyase, from ATP and dephospho-CoA. This Escherichia coli O17:K52:H18 (strain UMN026 / ExPEC) protein is 2-(5''-triphosphoribosyl)-3'-dephosphocoenzyme-A synthase.